Consider the following 121-residue polypeptide: MSITKDQIIEAVASMSVMEVVELIEAMEEKFGVSAAAAVMAGPAAAEAVEEKTEFDVVLTAAGANKVAVIKAVRGATGLGLKEAKDLVEAAPANLKEAVSKDEAEALKKELEAAGASVEIK.

It belongs to the bacterial ribosomal protein bL12 family. As to quaternary structure, homodimer. Part of the ribosomal stalk of the 50S ribosomal subunit. Forms a multimeric L10(L12)X complex, where L10 forms an elongated spine to which 2 to 4 L12 dimers bind in a sequential fashion. Binds GTP-bound translation factors.

In terms of biological role, forms part of the ribosomal stalk which helps the ribosome interact with GTP-bound translation factors. Is thus essential for accurate translation. The sequence is that of Large ribosomal subunit protein bL12 from Aeromonas hydrophila subsp. hydrophila (strain ATCC 7966 / DSM 30187 / BCRC 13018 / CCUG 14551 / JCM 1027 / KCTC 2358 / NCIMB 9240 / NCTC 8049).